A 615-amino-acid polypeptide reads, in one-letter code: Delta-like protein B (615 aa).

The first 20 residues, 1 to 20 (MAHLSLYCLLSVSLLQLVAS), serve as a signal peptide directing secretion. The Extracellular portion of the chain corresponds to 21–522 (SGVFELKVHS…VGQTSPSAVA (502 aa)). In terms of domain architecture, DSL spans 159-203 (VFCDEFYFGEACSDYCRPRDDTLGHYTCDENGNKECLVGWQGDYC). Disulfide bonds link Cys-161/Cys-170, Cys-174/Cys-186, Cys-194/Cys-203, Cys-208/Cys-219, Cys-212/Cys-225, Cys-227/Cys-236, Cys-245/Cys-250, Cys-258/Cys-267, Cys-274/Cys-286, Cys-280/Cys-296, Cys-298/Cys-307, Cys-314/Cys-325, Cys-319/Cys-334, Cys-336/Cys-345, Cys-352/Cys-363, Cys-357/Cys-373, Cys-375/Cys-384, Cys-391/Cys-402, Cys-396/Cys-411, Cys-413/Cys-422, Cys-429/Cys-440, Cys-434/Cys-449, Cys-451/Cys-460, Cys-467/Cys-478, Cys-472/Cys-487, and Cys-489/Cys-498. EGF-like domains follow at residues 204 to 237 (SDPI…PSCS), 241 to 268 (HYPG…LFCN), and 270 to 308 (DLNY…TNCE). The EGF-like 4; calcium-binding domain occupies 310–346 (EINECDCNPCKNGGSCNDLENDYSCTCPQGFYGKNCE). 2 EGF-like domains span residues 348–385 (IAMT…SNCE) and 387–423 (RLDR…SRCE). One can recognise an EGF-like 7; calcium-binding domain in the interval 425–461 (NIDDCARYPCQNAGTCQDGINDYTCTCTLGFTGKNCS). An N-linked (GlcNAc...) asparagine glycan is attached at Asn-459. One can recognise an EGF-like 8 domain in the interval 463-499 (RADACLTNPCLHGGTCFTHFSGPVCQCVPGFMGSTCE). Residues 523–543 (VSCVLGVLAVFLGVCVGLVVL) traverse the membrane as a helical segment. Topologically, residues 544–615 (RRRRHRLRRQ…FLWSAGGGLR (72 aa)) are cytoplasmic.

In terms of processing, ubiquitinated by mib, leading to its endocytosis and subsequent degradation.

The protein resides in the membrane. Its function is as follows. Acts as a ligand for Notch receptors and is involved in primary neurogenesis. Can activate Notch receptors, thereby playing a key role in lateral inhibition, a process that prevents the immediate neighbors of each nascent neural cell from simultaneously embarking on neural differentiation. This is Delta-like protein B (dlb) from Danio rerio (Zebrafish).